The primary structure comprises 914 residues: Solute carrier family 12 member 9 (914 aa).

Over 1–36 (MASENSPLLAYRLLGEEGAAFPPNGAGGSGVASARK) the chain is Cytoplasmic. Ser6 is subject to Phosphoserine. Residues 37–57 (LSTFLGVVVPTVLSMFSIVVF) form a helical membrane-spanning segment. Over 58–72 (LRIGFVVGHAGLLQA) the chain is Extracellular. A helical transmembrane segment spans residues 73-93 (LAMLLVAYVILALTVLSVCAI). Residues 94–119 (ATNGAVRGGGAYFMISRTLGPEVGGS) lie on the Cytoplasmic side of the membrane. A helical transmembrane segment spans residues 120 to 140 (IGLMFYLANVCGCAVSLLGLV). The Extracellular portion of the chain corresponds to 141 to 167 (ESILDVFGADVTGSSGIKVLPQGYGWN). A helical membrane pass occupies residues 168–188 (LLYGSLLLGLVGGVCALGAGL). Residues 189-193 (YARAS) are Cytoplasmic-facing. Residues 194–214 (FLTFLLVSGSLASVLVSFVAV) form a helical membrane-spanning segment. Residues 215 to 262 (GPRNITLAPRPGTNGSSVPPRHGHFTGFNGSTLKDNLGAGYAEDYTTG) lie on the Extracellular side of the membrane. N-linked (GlcNAc...) asparagine glycosylation is found at Asn218, Asn228, and Asn243. The chain crosses the membrane as a helical span at residues 263 to 283 (AMMTFASVFAVLFNGCTGIMA). Residues 284 to 297 (GANMSGELKDPSRA) lie on the Cytoplasmic side of the membrane. A helical transmembrane segment spans residues 298–318 (IPLGTIIAVAYTFFIYILLFF). The Extracellular segment spans residues 319–338 (LSSFTCDRALLQGDYGFFRD). A helical transmembrane segment spans residues 339–359 (ISLWPPLVLIGIYATALSASM). The Cytoplasmic portion of the chain corresponds to 360–376 (SSLIGASRILHALAQDD). The chain crosses the membrane as a helical span at residues 377-399 (LFGVILAPAKVVSGGGNPWGAVL). The Extracellular portion of the chain corresponds to 400–416 (YSWGLVQLVLLAGKLNT). Residues 417 to 437 (LAAVVTVFYLVAYAAVDLSCL) traverse the membrane as a helical segment. The Cytoplasmic portion of the chain corresponds to 438–466 (SLEWASAPNFRPTFSLFSWHTCLLGVASC). The chain crosses the membrane as a helical span at residues 467–487 (LLMMFLISPGAAGGSLLLMGL). Residues 488–740 (LSALLTARGG…LLRPRGGPGY (253 aa)) lie on the Extracellular side of the membrane. The tract at residues 645-678 (PAFSEPAEGTREGGSPALSTLFPPPRAPGSPRAL) is disordered. A helical membrane pass occupies residues 741–761 (VDVCGLFLLQMATILSMVPAW). The Cytoplasmic portion of the chain corresponds to 762 to 914 (HSARLRIFLC…GVTPVTCTDL (153 aa)). The interval 843 to 864 (QQGRGTGGGPGGPEGRDGEEGP) is disordered. Residues 846–855 (RGTGGGPGGP) show a composition bias toward gly residues.

It belongs to the SLC12A transporter family. As to quaternary structure, interacts with SLC12A1.

It localises to the cell membrane. The protein resides in the lysosome membrane. Functionally, may be an inhibitor of SLC12A1. Seems to correspond to a subunit of a multimeric transport system and thus, additional subunits may be required for its function. May play a role in lysosomal ion flux and osmoregulation. The chain is Solute carrier family 12 member 9 (Slc12a9) from Rattus norvegicus (Rat).